We begin with the raw amino-acid sequence, 467 residues long: Putative ankyrin repeat protein R911 (467 aa).

ANK repeat units follow at residues 38-70, 79-108, 109-138, 140-168, 170-198, 199-228, 229-258, 260-288, 289-318, 320-348, 350-378, 379-408, 410-438, and 440-467; these read IKTD…PIIV, TLNK…DIRA, GNDY…DIRA, NDYA…NIRA, NDHA…DIRS, DNDY…NIRS, DNDY…DIKS, NDYA…NIRV, NNNY…DIIA, NNFA…DIKS, NDYA…DIRV, ENDY…DIRS, NDYA…DIKA, and DDYA…AVLS.

This chain is Putative ankyrin repeat protein R911, found in Acanthamoeba polyphaga mimivirus (APMV).